A 146-amino-acid polypeptide reads, in one-letter code: Antiholin-like protein LrgA (146 aa).

4 helical membrane-spanning segments follow: residues 7–29, 34–53, 65–87, and 97–119; these read YGFL…IAAI, IPAS…LKVI, LTSL…LGVM, and VILL…ILSL.

Belongs to the CidA/LrgA family. LrgA subfamily.

Its subcellular location is the cell membrane. In terms of biological role, inhibits the expression or activity of extracellular murein hydrolases by interacting, possibly with LrgB, with the holin-like protein CidA. The LrgAB and CidA proteins may affect the proton motive force of the membrane. May be involved in programmed cell death (PCD), possibly triggering PCD in response to antibiotics and environmental stresses. This Bacillus subtilis (strain 168) protein is Antiholin-like protein LrgA.